A 497-amino-acid polypeptide reads, in one-letter code: Serine hydroxymethyltransferase (497 aa).

(6S)-5,6,7,8-tetrahydrofolate contacts are provided by residues leucine 176 and 180 to 182; that span reads GHL. Lysine 289 carries the N6-(pyridoxal phosphate)lysine modification.

This sequence belongs to the SHMT family. In terms of assembly, homodimer. Pyridoxal 5'-phosphate serves as cofactor.

The protein resides in the cytoplasm. It carries out the reaction (6R)-5,10-methylene-5,6,7,8-tetrahydrofolate + glycine + H2O = (6S)-5,6,7,8-tetrahydrofolate + L-serine. It participates in one-carbon metabolism; tetrahydrofolate interconversion. The protein operates within amino-acid biosynthesis; glycine biosynthesis; glycine from L-serine: step 1/1. Functionally, catalyzes the reversible interconversion of serine and glycine with tetrahydrofolate (THF) serving as the one-carbon carrier. This reaction serves as the major source of one-carbon groups required for the biosynthesis of purines, thymidylate, methionine, and other important biomolecules. Also exhibits THF-independent aldolase activity toward beta-hydroxyamino acids, producing glycine and aldehydes, via a retro-aldol mechanism. The chain is Serine hydroxymethyltransferase from Chlamydia felis (strain Fe/C-56) (Chlamydophila felis).